The primary structure comprises 412 residues: Na(+)-translocating NADH-quinone reductase subunit B (412 aa).

Helical transmembrane passes span 57–77, 127–147, and 163–183; these read MILV…NVGL, VFFL…EVLF, and SILF…ALGI. The residue at position 236 (Thr236) is an FMN phosphoryl threonine. Transmembrane regions (helical) follow at residues 270–290, 297–317, 322–342, 358–378, and 381–401; these read GSIG…ILFG, IVAG…VIGS, MFAM…GMMF, WSYG…NPAY, and GMML…YLVV.

This sequence belongs to the NqrB/RnfD family. In terms of assembly, composed of six subunits; NqrA, NqrB, NqrC, NqrD, NqrE and NqrF. It depends on FMN as a cofactor.

The protein localises to the cell inner membrane. It carries out the reaction a ubiquinone + n Na(+)(in) + NADH + H(+) = a ubiquinol + n Na(+)(out) + NAD(+). NQR complex catalyzes the reduction of ubiquinone-1 to ubiquinol by two successive reactions, coupled with the transport of Na(+) ions from the cytoplasm to the periplasm. NqrA to NqrE are probably involved in the second step, the conversion of ubisemiquinone to ubiquinol. This Klebsiella pneumoniae subsp. pneumoniae (strain ATCC 700721 / MGH 78578) protein is Na(+)-translocating NADH-quinone reductase subunit B.